We begin with the raw amino-acid sequence, 119 residues long: MANIKKGDLVQVITGRSQARGGDRGKQGRVIEVLVEKNRVIVEGVNFVTKHVRVGQTQRGTKTGGIETHEASIHVSNVALVDPETKKPTRVGFRTETVTKDGVAKTVRVRYAKKSGKDL.

Belongs to the universal ribosomal protein uL24 family. As to quaternary structure, part of the 50S ribosomal subunit.

In terms of biological role, one of two assembly initiator proteins, it binds directly to the 5'-end of the 23S rRNA, where it nucleates assembly of the 50S subunit. One of the proteins that surrounds the polypeptide exit tunnel on the outside of the subunit. The chain is Large ribosomal subunit protein uL24 from Leifsonia xyli subsp. xyli (strain CTCB07).